The chain runs to 265 residues: Expansin-like A2 (265 aa).

The signal sequence occupies residues 1–21 (MLQGFLFLLSVVLLFSSSAAA). Residues 42–148 (SGACAYGSMA…RRVPCDYGNK (107 aa)) enclose the Expansin-like EG45 domain. 2 N-linked (GlcNAc...) asparagine glycosylation sites follow: Asn100 and Asn103. In terms of domain architecture, Expansin-like CBD spans 162–244 (NYLAIKLLYQ…NWEAGKSYDA (83 aa)).

The protein belongs to the expansin family. Expansin-like A subfamily.

It localises to the secreted. The sequence is that of Expansin-like A2 (EXLA2) from Arabidopsis thaliana (Mouse-ear cress).